A 600-amino-acid polypeptide reads, in one-letter code: DNA repair and recombination protein mus-11 (600 aa).

The DNA-binding element occupies K148 to R152. Positions L268–P319 are enriched in polar residues. Disordered regions lie at residues L268–A357 and A387–A600. Low complexity-rich tracts occupy residues N325–Q343 and A458–P470. Residues G502–G512 are compositionally biased toward polar residues. Composition is skewed to low complexity over residues S540–A564 and A577–G591.

Belongs to the RAD52 family. In terms of assembly, part of a complex that includes mei-3/rad51 and mus-11/rad52.

It is found in the nucleus. Involved in DNA double-strand break (DSB) repair and recombination. Promotes the annealing of complementary single-stranded DNA and by stimulation of the mei-3/rad51 recombinase. The sequence is that of DNA repair and recombination protein mus-11 (mus-11) from Neurospora crassa (strain ATCC 24698 / 74-OR23-1A / CBS 708.71 / DSM 1257 / FGSC 987).